Here is a 376-residue protein sequence, read N- to C-terminus: MIEQSLSKPSFSLSIPIPQPPKSKSSFLCSYSKIRCESVDYPSSSKIDAKHPQISSINSNGGGKMGSYTGRDPNVKKPEWLRQKAPQGERYDEVKESLSRLKLNTVCQEAQCPNIGECWNGGGDGIATATIMVLGDTCTRGCRFCAVKTSRNPPPPDPMEPLNTALAIASWGVDYIVITSVDRDDLPDGGSGHFAQTVRAMKELKPEIMVECLTSDFRGDLKAVDTLVHSGLDVFAHNVETVKRLQRIVRDPRAGYEQSLSVLKHAKISKKGMITKTSIMLGLGESDNEVKEAMADLRAIGVDILTFGQYLQPTPLHLTVKEYVTPEKFAFWKEYGESIGFRYVASGPLVRSSYRAGELFVKTMVKESVKEAAAIS.

Positions 1–13 are enriched in polar residues; that stretch reads MIEQSLSKPSFSL. 2 disordered regions span residues 1–25 and 47–75; these read MIEQ…KSKS and IDAK…DPNV. A chloroplast-targeting transit peptide spans 1 to 35; it reads MIEQSLSKPSFSLSIPIPQPPKSKSSFLCSYSKIR. Cys-107, Cys-112, Cys-118, Cys-138, Cys-142, Cys-145, and Ser-353 together coordinate [4Fe-4S] cluster. The Radical SAM core domain maps to 121–342; sequence GGGDGIATAT…KEYGESIGFR (222 aa).

This sequence belongs to the radical SAM superfamily. Lipoyl synthase family. It depends on [4Fe-4S] cluster as a cofactor.

The protein resides in the plastid. Its subcellular location is the chloroplast. It carries out the reaction [[Fe-S] cluster scaffold protein carrying a second [4Fe-4S](2+) cluster] + N(6)-octanoyl-L-lysyl-[protein] + 2 oxidized [2Fe-2S]-[ferredoxin] + 2 S-adenosyl-L-methionine + 4 H(+) = [[Fe-S] cluster scaffold protein] + N(6)-[(R)-dihydrolipoyl]-L-lysyl-[protein] + 4 Fe(3+) + 2 hydrogen sulfide + 2 5'-deoxyadenosine + 2 L-methionine + 2 reduced [2Fe-2S]-[ferredoxin]. Its pathway is protein modification; protein lipoylation via endogenous pathway; protein N(6)-(lipoyl)lysine from octanoyl-[acyl-carrier-protein]: step 2/2. Its function is as follows. Catalyzes the radical-mediated insertion of two sulfur atoms into the C-6 and C-8 positions of the octanoyl moiety bound to the lipoyl domains of lipoate-dependent enzymes, thereby converting the octanoylated domains into lipoylated derivatives. In Populus trichocarpa (Western balsam poplar), this protein is Lipoyl synthase 1, chloroplastic.